Consider the following 555-residue polypeptide: Formate--tetrahydrofolate ligase (555 aa).

An ATP-binding site is contributed by 65 to 72 (TPAGEGKS).

Belongs to the formate--tetrahydrofolate ligase family.

It carries out the reaction (6S)-5,6,7,8-tetrahydrofolate + formate + ATP = (6R)-10-formyltetrahydrofolate + ADP + phosphate. It functions in the pathway one-carbon metabolism; tetrahydrofolate interconversion. The polypeptide is Formate--tetrahydrofolate ligase (Staphylococcus aureus (strain USA300)).